Here is a 261-residue protein sequence, read N- to C-terminus: MSIESLNAFSMDFFSLKGKTAIVTGGNSGLGQAFAMALAKAGANIFIPSFVKDNGETKEMIEKQGVEVDFMQVGITAEGAPQKIIAACCERFGTVDILVNNAGICKLNKVLDFGRADWDPMIDVNLTAAFELSYEAAKIMIPQKSGKIINICSLFSYLGGQWSPAYSATKHALAGFTKAYCDELGQYNIQVNGIAPGYYATDITLATRSNPETNQRVLDHIPANRWGDTQDLMGAAVFLASPASNYVNGHLLVVDGGYLVR.

An NADP(+)-binding site is contributed by 22 to 46 (IVTGGNSGLGQAFAMALAKAGANIF). Residue Ser-153 coordinates substrate. The active-site Proton acceptor is Tyr-166.

This sequence belongs to the short-chain dehydrogenases/reductases (SDR) family.

This is an uncharacterized protein from Escherichia coli (strain K12).